A 260-amino-acid polypeptide reads, in one-letter code: Global transcriptional regulator CodY (260 aa).

The tract at residues Met1 to Leu159 is GAF domain. Positions Ala207 to Arg226 form a DNA-binding region, H-T-H motif.

This sequence belongs to the CodY family.

It is found in the cytoplasm. DNA-binding global transcriptional regulator which is involved in the adaptive response to starvation and acts by directly or indirectly controlling the expression of numerous genes in response to nutrient availability. During rapid exponential growth, CodY is highly active and represses genes whose products allow adaptation to nutrient depletion. The protein is Global transcriptional regulator CodY of Streptococcus uberis (strain ATCC BAA-854 / 0140J).